Here is a 284-residue protein sequence, read N- to C-terminus: Tropomyosin (284 aa).

Methionine 1 carries the post-translational modification N-acetylmethionine. 2 disordered regions span residues 1–49 (MDAI…NQKK) and 103–126 (EERLNTATTKLAEASQAADESERM). A coiled-coil region spans residues 1–284 (MDAIKKKMQA…DQAFSELSGF (284 aa)). A compositionally biased stretch (basic and acidic residues) spans 12-45 (KLEKDNAMDKADTLEQQNKEANLRAEKTEEEIRA).

It belongs to the tropomyosin family. As to quaternary structure, homodimer. As to expression, expressed in leg muscle and chest protection muscle (at protein level).

Functionally, tropomyosin, in association with the troponin complex, plays a central role in the calcium dependent regulation of muscle contraction. This Chionoecetes opilio (Atlantic snow crab) protein is Tropomyosin.